Consider the following 419-residue polypeptide: Carbohydrate sulfotransferase 12 (419 aa).

The Cytoplasmic portion of the chain corresponds to 1 to 5; that stretch reads MTKPR. Residues 6–26 traverse the membrane as a helical; Signal-anchor for type II membrane protein segment; sequence LFRLWLVLGSALMILLIIVYW. At 27–419 the chain is on the lumenal side; sequence DNVGTAHFYL…YPKPENLLRD (393 aa). Residues 78-87 show a composition bias toward basic and acidic residues; it reads HNDLSRRKTE. The interval 78–99 is disordered; that stretch reads HNDLSRRKTEQPPVPAPSKPVL. N139 carries an N-linked (GlcNAc...) asparagine glycan. 176–182 is a 3'-phosphoadenylyl sulfate binding site; the sequence is PKVACTN. The N-linked (GlcNAc...) asparagine glycan is linked to N214. Position 250-258 (250-258) interacts with 3'-phosphoadenylyl sulfate; the sequence is RDPFVRLIS. Residues N285 and N375 are each glycosylated (N-linked (GlcNAc...) asparagine).

It belongs to the sulfotransferase 2 family.

Its subcellular location is the golgi apparatus membrane. The catalysed reaction is chondroitin beta-D-glucuronate + n 3'-phosphoadenylyl sulfate = chondroitin 4'-sulfate + n adenosine 3',5'-bisphosphate + n H(+). In terms of biological role, catalyzes the transfer of sulfate to position 4 of the N-acetylgalactosamine (GalNAc) residue of chondroitin and desulfated dermatan sulfate. Chondroitin sulfate constitutes the predominant proteoglycan present in cartilage and is distributed on the surfaces of many cells and extracellular matrices. Activity toward partially desulfated dermatan sulfate is however lower. Does not form 4, 6-di-O-sulfated GalNAc when chondroitin sulfate C is used as an acceptor. In Mus musculus (Mouse), this protein is Carbohydrate sulfotransferase 12 (Chst12).